We begin with the raw amino-acid sequence, 310 residues long: MKNNTGYIIGAYPCAPSFHQKSEEEETEFWRQLSDTPDIRGLEQPCLEHLHPLGDEWLLRHTPGNWQIVVTAIMETMRRRSENGGFGLASSDEEQRKACVEYYRHLYQKINKINGNNTGKVIALELHAAPLAGNPNVAQATDAFARSLKEIANWDWSCDLVLEHCDAMTGPAPRKGFLPLVNVLETIADYDISVCINWARSAIEGRDTSLPLIHTQQAKQAGKLGALMFSGTTLDGEYGEWQDLHAPFAPFCPQSLMTEKHVKELITAAAPELLQFTGIKLLEINASADINHRINILRDGINMMKKATRR.

This sequence belongs to the YiaX1 family.

This is an uncharacterized protein from Salmonella typhimurium (strain LT2 / SGSC1412 / ATCC 700720).